The sequence spans 859 residues: DNA (cytosine-5)-methyltransferase 3B (859 aa).

The interaction with DNMT1 and DNMT3A stretch occupies residues 1–305 (MKGDSRHLNE…LATFNKLVSY (305 aa)). A disordered region spans residues 25–226 (GNFSDQSSDT…RDGDSTEYQD (202 aa)). Over residues 85 to 94 (DRDDEVDDGN) the composition is skewed to acidic residues. Position 96 is a phosphoserine (Ser96). A Glycyl lysine isopeptide (Lys-Gly) (interchain with G-Cter in SUMO2) cross-link involves residue Lys102. The segment covering 103 to 114 (LTRETKDTRTRS) has biased composition (basic and acidic residues). A Phosphothreonine modification is found at Thr112. Ser116 is subject to Phosphoserine. Residues 167–179 (SSSASTPWSSPAS) are compositionally biased toward low complexity. A compositionally biased stretch (polar residues) spans 189–198 (KSVSTPSVDL). Positions 214 to 226 (AESRDGDSTEYQD) are enriched in basic and acidic residues. Ser216 carries the post-translational modification Phosphoserine. The PWWP domain maps to 232 to 290 (IGDLVWGKIKGFSWWPAMVVSWKATSKRQAMPGMRWVQWFGDGKFSEISADKLVALGLF). The interval 348–429 (KPTGIEGLKP…ESRERMASEV (82 aa)) is disordered. Basic and acidic residues-rich tracts occupy residues 370–381 (RRSDSRNLEPRR) and 412–426 (GKDRGEDEESRERMA). Arg415 is subject to Citrulline. In terms of domain architecture, ADD spans 428–560 (EVTNNKGNLE…LQDFFTTDPD (133 aa)). The GATA-type; atypical zinc-finger motif lies at 439 to 469 (RCLSCGKKNPVSFHPLFEGGLCQSCRDRFLE). Positions 440–532 (CLSCGKKNPV…LQEPWSCYMC (93 aa)) are interaction with the PRC2/EED-EZH2 complex. The PHD-type; atypical zinc-finger motif lies at 480 to 536 (QSYCTVCCEGRELLLCSNTSCCRCFCVECLEVLVGAGTAEDAKLQEPWSCYMCLPQR). An SAM-dependent MTase C5-type domain is found at 581 to 859 (IRVLSLFDGI…APLKDYFACE (279 aa)). S-adenosyl-L-methionine contacts are provided by residues 588–592 (DGIAT) and Glu611. Residue Lys623 forms a Glycyl lysine isopeptide (Lys-Gly) (interchain with G-Cter in SUMO2) linkage. 633-635 (DVR) lines the S-adenosyl-L-methionine pocket. Cys657 is an active-site residue. 838–840 (RSW) serves as a coordination point for S-adenosyl-L-methionine.

This sequence belongs to the class I-like SAM-binding methyltransferase superfamily. C5-methyltransferase family. Interacts with CBX4, DNMT1, DNMT3A, SETDB1, UBE2I9, UBL1 and ZHX1. Interacts with SUV39H1 and BAZ2A/TIP5. Interacts with the PRC2/EED-EZH2 complex. Interacts with UHRF1. Sumoylated. In terms of processing, citrullinated by PADI4.

It localises to the nucleus. It carries out the reaction a 2'-deoxycytidine in DNA + S-adenosyl-L-methionine = a 5-methyl-2'-deoxycytidine in DNA + S-adenosyl-L-homocysteine + H(+). With respect to regulation, activated by binding to the regulatory factor DNMT3L. Required for genome-wide de novo methylation and is essential for the establishment of DNA methylation patterns during development. DNA methylation is coordinated with methylation of histones. May preferentially methylates nucleosomal DNA within the nucleosome core region. May function as transcriptional co-repressor by associating with CBX4 and independently of DNA methylation. Seems to be involved in gene silencing. In association with DNMT1 and via the recruitment of CTCFL/BORIS, involved in activation of BAG1 gene expression by modulating dimethylation of promoter histone H3 at H3K4 and H3K9. Functions as a transcriptional corepressor by associating with ZHX1. Required for DUX4 silencing in somatic cells. This Mus musculus (Mouse) protein is DNA (cytosine-5)-methyltransferase 3B (Dnmt3b).